A 351-amino-acid polypeptide reads, in one-letter code: Large ribosomal subunit protein uL3 (351 aa).

Disordered regions lie at residues 1–31 (MGHR…TPRT) and 246–271 (KGSR…GQLG).

This sequence belongs to the universal ribosomal protein uL3 family. In terms of assembly, part of the 50S ribosomal subunit. Forms a cluster with proteins L14 and L24e.

Its function is as follows. One of the primary rRNA binding proteins, it binds directly near the 3'-end of the 23S rRNA, where it nucleates assembly of the 50S subunit. This chain is Large ribosomal subunit protein uL3, found in Saccharolobus islandicus (strain M.16.27) (Sulfolobus islandicus).